A 254-amino-acid polypeptide reads, in one-letter code: MVIANKNIIFVAGLGGIGFDTSREIVKSGPKNLVILDRIENPAAIAELKALNPKVIVTFYPYDVTVPVAETTKLLKIIFDKLKTVDLLINGAGILDDYQIERTIAVNFTGTVNTTTAIMSFWDKRKGGPGGVIANICSVTGFNAIYQVPVYSASKAAALSFTNSLAKLAPITGVTAYSINPGITKTTLVHKFNSWLDVEPRVAELLLEHPTQTTLQCAQNFVKAIEANQNGAIWKLDLGRLEAIEWTKHWDSHI.

10-33 (FVAGLGGIGFDTSREIVKSGPKNL) lines the NAD(+) pocket. Position 138 (Ser138) interacts with substrate. Tyr151 (proton acceptor) is an active-site residue.

The protein belongs to the short-chain dehydrogenases/reductases (SDR) family. In terms of assembly, homodimer.

It carries out the reaction a primary alcohol + NAD(+) = an aldehyde + NADH + H(+). The enzyme catalyses a secondary alcohol + NAD(+) = a ketone + NADH + H(+). The chain is Alcohol dehydrogenase (Adh) from Drosophila mayaguana (Fruit fly).